The following is a 37-amino-acid chain: Potassium channel toxin alpha-KTx 11.1 (37 aa).

3 disulfides stabilise this stretch: Cys8–Cys27, Cys13–Cys33, and Cys17–Cys35.

It belongs to the short scorpion toxin superfamily. Potassium channel inhibitor family. Alpha-KTx 11 subfamily. As to expression, expressed by the venom gland.

The protein localises to the secreted. Binds and inhibits voltage-sensitive potassium channels. Inhibits the vertebrate potassium channels Kv1.1/KCNA1, Kv1.2/KCNA2 and Kv1.3/KCNA3 with low affinity. Also weakly inhibits Kv7.1/KCNQ1 (10 uM of the toxin inhibits currents by 21.43%). The protein is Potassium channel toxin alpha-KTx 11.1 of Parabuthus villosus (Black hairy thick-tailed scorpion).